Reading from the N-terminus, the 706-residue chain is MSTAVAEFKPSEKLLKTRNIGISAHIDSGKTTLTERILFYTNRIHAIHEVRGKDGVGAKMDSMDLERERGITIQSAATYCQWKNHTINIIDTPGHVDFTVEVERSLRVLDSAILVLCGVAGVQSQSITVDRQMRRYNVPRVAFINKLDRTGANPFRVIEQLKEKLKHNAVPVQIPIGLENDLKGVVDLVTMKAYYFEGKDGMDIQEKEIPDDLKELANKKHEELLDAASMFSDELTEALLEGTPTEEMIKKAIRTGTIELKMTPVFMGSAFKNKGVQKLLDGVLDYLASPVDVKNKALDQNNNEEMIVLESNYEKPLVCLAFKLEDGRYGQLTYVRVYQGKLSKGMTIYNMSNNKKHNVGRLCRMHSDEMEDIDSAEAGDIIALFGIDCASGDTFTDGKLKVSMESMFVPAPVISLTIEAKESKHLNNLAKALNRFTKEDPTFQTHVDPESGQTIIKGMGELHLEVYIERMKREYGVELITGAPQVAYRETITSKADFDYTHKKQTGGQGQFGRVAGYMEPIPLEETLDYDFVNKVVGGAIPREYIQSVDKGFKSCLERGSLIGFPIIGVRCVINDGAYHDVDSSDMAFQIAGRYAFRQGFNKANPQILEPIMKVEVDGPSEFQGAILGSLNQRRGMILNTTEEDAYCKTEAEVPLADMFGYSTVLRSSTQGKAEFSMEFSRYAPVPRNVAEELMKKYKVNNKDED.

Residues 15–291 (LKTRNIGISA…GVLDYLASPV (277 aa)) enclose the tr-type G domain. GTP is bound by residues 24–31 (AHIDSGKT), 91–95 (DTPGH), and 145–148 (NKLD).

The protein belongs to the TRAFAC class translation factor GTPase superfamily. Classic translation factor GTPase family. EF-G/EF-2 subfamily.

Its subcellular location is the cytoplasm. Functionally, catalyzes the GTP-dependent ribosomal translocation step during translation elongation. During this step, the ribosome changes from the pre-translocational (PRE) to the post-translocational (POST) state as the newly formed A-site-bound peptidyl-tRNA and P-site-bound deacylated tRNA move to the P and E sites, respectively. Catalyzes the coordinated movement of the two tRNA molecules, the mRNA and conformational changes in the ribosome. This chain is Elongation factor G, found in Leptospira borgpetersenii serovar Hardjo-bovis (strain JB197).